A 537-amino-acid polypeptide reads, in one-letter code: Tyrosine-protein kinase Fyn (537 aa).

Residue G2 is the site of N-myristoyl glycine attachment. Residues C3 and C6 are each lipidated (S-palmitoyl cysteine). T12 carries the phosphothreonine; by PKC modification. S21 and S26 each carry phosphoserine. One can recognise an SH3 domain in the interval 82 to 143 (TGVTLFVALY…PSNYVAPVDS (62 aa)). The SH2 domain occupies 149–246 (WYFGKLGRKD…GLCCRLVVPC (98 aa)). At Y185 the chain carries Phosphotyrosine. Positions 271 to 524 (LQLIKRLGNG…YLQGFLEDYF (254 aa)) constitute a Protein kinase domain. ATP contacts are provided by residues 277 to 285 (LGNGQFGEV) and K299. Catalysis depends on D390, which acts as the Proton acceptor. Y420 carries the phosphotyrosine; by autocatalysis modification. Residue Y531 is modified to Phosphotyrosine; by CSK.

Belongs to the protein kinase superfamily. Tyr protein kinase family. SRC subfamily. Interacts (via its SH3 domain) with PIK3R1 and PRMT8. Interacts with FYB1, PAG1, and SH2D1A. Interacts with CD79A (tyrosine-phosphorylated form); the interaction increases FYN activity. Interacts (via SH2 domain) with CSF1R (tyrosine phosphorylated). Interacts with TOM1L1 (phosphorylated form). Interacts with KDR (tyrosine phosphorylated). Interacts (via SH3 domain) with KLHL2 (via N-terminus). Interacts with SH2D1A and SLAMF1. Interacts with ITCH; the interaction phosphorylates ITCH and negatively regulates its activity. Interacts with FASLG. Interacts with RUNX3. Interacts with KIT. Interacts with EPHA8; possible downstream effector of EPHA8 in regulation of cell adhesion. Interacts with PTK2/FAK1; this interaction leads to PTK2/FAK1 phosphorylation and activation. Interacts with CAV1; this interaction couples integrins to the Ras-ERK pathway. Interacts with UNC119. Interacts (via SH2 domain) with PTPRH (phosphorylated form). Interacts with PTPRO (phosphorylated form). Interacts with PTPRB (phosphorylated form). Interacts with FYB2. Interacts with DSCAM. Interacts with SKAP1 and FYB1; this interaction promotes the phosphorylation of CLNK. Interacts with NEDD9; in the presence of PTK2. Requires Mn(2+) as cofactor. Autophosphorylated at Tyr-420. Phosphorylation on the C-terminal tail at Tyr-531 by CSK maintains the enzyme in an inactive state. PTPRC/CD45 dephosphorylates Tyr-531 leading to activation. Ultraviolet B (UVB) strongly increase phosphorylation at Thr-12 and kinase activity, and promotes translocation from the cytoplasm to the nucleus. Dephosphorylation at Tyr-420 by PTPN2 negatively regulates T-cell receptor signaling. Phosphorylated at tyrosine residues, which can be enhanced by NTN1. In terms of processing, palmitoylated. Palmitoylation at Cys-3 and Cys-6, probably by ZDHHC21, regulates subcellular location.

It is found in the cytoplasm. The protein resides in the nucleus. It localises to the cell membrane. Its subcellular location is the perikaryon. It carries out the reaction L-tyrosyl-[protein] + ATP = O-phospho-L-tyrosyl-[protein] + ADP + H(+). Its activity is regulated as follows. Inhibited by phosphorylation of Tyr-531 by leukocyte common antigen and activated by dephosphorylation of this site. Its function is as follows. Non-receptor tyrosine-protein kinase that plays a role in many biological processes including regulation of cell growth and survival, cell adhesion, integrin-mediated signaling, cytoskeletal remodeling, cell motility, immune response and axon guidance. Inactive FYN is phosphorylated on its C-terminal tail within the catalytic domain. Following activation by PKA, the protein subsequently associates with PTK2/FAK1, allowing PTK2/FAK1 phosphorylation, activation and targeting to focal adhesions. Involved in the regulation of cell adhesion and motility through phosphorylation of CTNNB1 (beta-catenin) and CTNND1 (delta-catenin). Regulates cytoskeletal remodeling by phosphorylating several proteins including the actin regulator WAS and the microtubule-associated proteins MAP2 and MAPT. Promotes cell survival by phosphorylating AGAP2/PIKE-A and preventing its apoptotic cleavage. Participates in signal transduction pathways that regulate the integrity of the glomerular slit diaphragm (an essential part of the glomerular filter of the kidney) by phosphorylating several slit diaphragm components including NPHS1, KIRREL1 and TRPC6. Plays a role in neural processes by phosphorylating DPYSL2, a multifunctional adapter protein within the central nervous system, ARHGAP32, a regulator for Rho family GTPases implicated in various neural functions, and SNCA, a small pre-synaptic protein. Involved in reelin signaling by mediating phosphorylation of DAB1 following reelin (RELN)-binding to its receptor. Participates in the downstream signaling pathways that lead to T-cell differentiation and proliferation following T-cell receptor (TCR) stimulation. Phosphorylates PTK2B/PYK2 in response to T-cell receptor activation. Also participates in negative feedback regulation of TCR signaling through phosphorylation of PAG1, thereby promoting interaction between PAG1 and CSK and recruitment of CSK to lipid rafts. CSK maintains LCK and FYN in an inactive form. Promotes CD28-induced phosphorylation of VAV1. In mast cells, phosphorylates CLNK after activation of immunoglobulin epsilon receptor signaling. Can also promote CD244-mediated NK cell activation. This chain is Tyrosine-protein kinase Fyn, found in Sus scrofa (Pig).